Consider the following 24-residue polypeptide: Conotoxin PIVF (24 aa).

Cystine bridges form between cysteine 2/cysteine 10, cysteine 3/cysteine 15, and cysteine 13/cysteine 19. Lysine 24 bears the Lysine amide mark.

The protein belongs to the conotoxin A superfamily. Expressed by the venom duct.

It localises to the secreted. In terms of biological role, probable neurotoxin with ion channel inhibitor activity. In vivo, elicits dose-dependently excitatory activity upon injection into fish. Its action is slowly reversible. This chain is Conotoxin PIVF, found in Conus purpurascens (Purple cone).